The sequence spans 346 residues: E3 ubiquitin-protein ligase MARCHF9 (346 aa).

2 disordered regions span residues 20–39 (GGGR…GGCG) and 47–92 (STRD…PGAL). Residues 63–75 (PRARGLAGDKEPR) are compositionally biased toward basic and acidic residues. A compositionally biased stretch (pro residues) spans 77-90 (GPLPPPAPPLPPPG). An RING-CH-type zinc finger spans residues 102-162 (DSGLRTPQCR…ELCYFKYQVL (61 aa)). Residues Cys-110, Cys-113, Cys-126, Cys-128, His-136, Cys-139, Cys-152, and Cys-155 each coordinate Zn(2+). 2 helical membrane passes run 185 to 205 (IAAI…LIWS) and 219 to 239 (LFQI…GLII). 2 disordered regions span residues 273–301 (DAGG…RPPA) and 326–346 (PPDA…VTTV). Positions 284–296 (PRNSRTGPTSGAT) are enriched in polar residues.

Homodimer. In terms of tissue distribution, ubiquitously expressed.

Its subcellular location is the golgi apparatus membrane. It is found in the lysosome membrane. It catalyses the reaction S-ubiquitinyl-[E2 ubiquitin-conjugating enzyme]-L-cysteine + [acceptor protein]-L-lysine = [E2 ubiquitin-conjugating enzyme]-L-cysteine + N(6)-ubiquitinyl-[acceptor protein]-L-lysine.. The protein operates within protein modification; protein ubiquitination. Its function is as follows. E3 ubiquitin-protein ligase that may mediate ubiquitination of MHC-I, CD4 and ICAM1, and promote their subsequent endocytosis and sorting to lysosomes via multivesicular bodies. E3 ubiquitin ligases accept ubiquitin from an E2 ubiquitin-conjugating enzyme in the form of a thioester and then directly transfer the ubiquitin to targeted substrates. The chain is E3 ubiquitin-protein ligase MARCHF9 from Homo sapiens (Human).